The sequence spans 106 residues: HIG1 domain family member 2A, mitochondrial (106 aa).

Position 2 is an N-acetylalanine (alanine 2). Positions 20–106 (VIEGLSPTVY…LAVTAMKSRP (87 aa)) constitute an HIG1 domain. The next 2 helical transmembrane spans lie at 47–67 (PVVP…LYSF) and 83–103 (IAAQ…TAMK). Topologically, residues 104 to 106 (SRP) are mitochondrial matrix.

As to quaternary structure, associates with cytochrome c oxidase (COX, complex IV); proposed complex component.

It is found in the mitochondrion membrane. Its subcellular location is the mitochondrion inner membrane. Its function is as follows. Proposed subunit of cytochrome c oxidase (COX, complex IV), which is the terminal component of the mitochondrial respiratory chain that catalyzes the reduction of oxygen to water. May be involved in cytochrome c oxidase activity. May play a role in the assembly of respiratory supercomplexes. The polypeptide is HIG1 domain family member 2A, mitochondrial (HIGD2A) (Homo sapiens (Human)).